The following is a 208-amino-acid chain: Protein-L-isoaspartate O-methyltransferase (208 aa).

Serine 59 is an active-site residue.

Belongs to the methyltransferase superfamily. L-isoaspartyl/D-aspartyl protein methyltransferase family.

The protein resides in the cytoplasm. It catalyses the reaction [protein]-L-isoaspartate + S-adenosyl-L-methionine = [protein]-L-isoaspartate alpha-methyl ester + S-adenosyl-L-homocysteine. Its function is as follows. Catalyzes the methyl esterification of L-isoaspartyl residues in peptides and proteins that result from spontaneous decomposition of normal L-aspartyl and L-asparaginyl residues. It plays a role in the repair and/or degradation of damaged proteins. The polypeptide is Protein-L-isoaspartate O-methyltransferase (Erwinia tasmaniensis (strain DSM 17950 / CFBP 7177 / CIP 109463 / NCPPB 4357 / Et1/99)).